A 505-amino-acid polypeptide reads, in one-letter code: Beta-agarase (505 aa).

The first 23 residues, 1–23 (MLKVIPWLLVTSSLVAIPTYIHA), serve as a signal peptide directing secretion. Glu-200 functions as the Proton donor in the catalytic mechanism. The Nucleophile role is filled by Glu-322.

It belongs to the glycosyl hydrolase 86 family.

It localises to the secreted. It catalyses the reaction Hydrolysis of (1-&gt;4)-beta-D-galactosidic linkages in agarose, giving the tetramer as the predominant product.. Hydrolase that cleaves agar at the (1-&gt;4) linkage, producing tetrameric saccharide molecules. Is specific for agar and agarose and does not digest alginate or carrageenan. This is Beta-agarase from Pseudoalteromonas atlantica (Alteromonas atlantica).